The primary structure comprises 271 residues: Acyl-[acyl-carrier-protein]--UDP-N-acetylglucosamine O-acyltransferase (271 aa).

The protein belongs to the transferase hexapeptide repeat family. LpxA subfamily. As to quaternary structure, homotrimer.

The protein resides in the cytoplasm. It carries out the reaction a (3R)-hydroxyacyl-[ACP] + UDP-N-acetyl-alpha-D-glucosamine = a UDP-3-O-[(3R)-3-hydroxyacyl]-N-acetyl-alpha-D-glucosamine + holo-[ACP]. Its pathway is glycolipid biosynthesis; lipid IV(A) biosynthesis; lipid IV(A) from (3R)-3-hydroxytetradecanoyl-[acyl-carrier-protein] and UDP-N-acetyl-alpha-D-glucosamine: step 1/6. In terms of biological role, involved in the biosynthesis of lipid A, a phosphorylated glycolipid that anchors the lipopolysaccharide to the outer membrane of the cell. This is Acyl-[acyl-carrier-protein]--UDP-N-acetylglucosamine O-acyltransferase from Rhizobium rhizogenes (strain K84 / ATCC BAA-868) (Agrobacterium radiobacter).